A 432-amino-acid chain; its full sequence is Zinc finger protein 829 (432 aa).

The KRAB domain occupies 35–106 (VMFRDVSIDF…DRELTRGLCS (72 aa)). Residues 156–178 (WECKICGKTFNQNSQFIQHQRIH) form a C2H2-type 1 zinc finger. Residues 184–206 (YESKEYGKSFSRGSLVTRHQRIH) form a C2H2-type 2; degenerate zinc finger. 8 consecutive C2H2-type zinc fingers follow at residues 212–234 (YECKECGKAFSCSSYFSQHQRIH), 240–262 (YECKECGKAFKYCSNLNDHQRIH), 268–290 (YECKVCGKAFTKSSQLFLHLRIH), 296–318 (YECKECGKAFTQHSRLIQHQRMH), 324–346 (YECKQCGKAFNSASTLTNHHRIH), 352–374 (YECEECRKAFIQSSELIQHQRIH), 380–402 (YECNECGKAFNKGSNLTRHQRIH), and 408–430 (YDCKECGKAFGSRSDLIRHEGIH).

The protein belongs to the krueppel C2H2-type zinc-finger protein family.

It is found in the nucleus. Its function is as follows. May be involved in transcriptional regulation. In Homo sapiens (Human), this protein is Zinc finger protein 829 (ZNF829).